The primary structure comprises 185 residues: Transcriptional repressor NrdR (185 aa).

A disordered region spans residues 1 to 24; the sequence is MRCPFCGGPDTQVKDSRPSEDSSA. A zinc finger lies at 3-34; sequence CPFCGGPDTQVKDSRPSEDSSAIRRRRVCPDC. Positions 12–24 are enriched in basic and acidic residues; sequence QVKDSRPSEDSSA. Positions 49–139 constitute an ATP-cone domain; that stretch reads LVVLKRSGKR…VYKNFREAQD (91 aa). Residues 148-185 form a disordered region; it reads GERLDGEGDLPEQGDAVPAPPDEAVAAPRRGRPARKRA. The segment covering 176–185 has biased composition (basic residues); the sequence is RRGRPARKRA.

This sequence belongs to the NrdR family. Zn(2+) is required as a cofactor.

In terms of biological role, negatively regulates transcription of bacterial ribonucleotide reductase nrd genes and operons by binding to NrdR-boxes. The chain is Transcriptional repressor NrdR from Methylorubrum extorquens (strain CM4 / NCIMB 13688) (Methylobacterium extorquens).